The chain runs to 61 residues: Small ribosomal subunit protein uS14 (61 aa).

Positions 24, 27, 40, and 43 each coordinate Zn(2+).

It belongs to the universal ribosomal protein uS14 family. Zinc-binding uS14 subfamily. In terms of assembly, part of the 30S ribosomal subunit. Contacts proteins S3 and S10. Requires Zn(2+) as cofactor.

Its function is as follows. Binds 16S rRNA, required for the assembly of 30S particles and may also be responsible for determining the conformation of the 16S rRNA at the A site. The sequence is that of Small ribosomal subunit protein uS14 from Campylobacter concisus (strain 13826).